The chain runs to 245 residues: MSRIDGRTPQQLRPVTIERGWSKHAEGSVLVSFGDTKVLCNASVTEGVPRWRKGSGEGWVTAEYAMLPRATNTRGDRESVKGRIGGRTHEISRLIGRSLRAVIDYKALGENTVVLDCDVLQADGGTRTAAITGAYVALADAVAWAQGRKLIKANRKPLTGTVSAVSVGIVDGTPLLDLRYEEDVRADTDMNVVCTGDGRFVEVQGTAEAEPFARDELNTLLDLATAGCTELAELQRKALDATLER.

Phosphate is bound by residues Arg-87 and 125–127; that span reads GTR.

This sequence belongs to the RNase PH family. Homohexameric ring arranged as a trimer of dimers.

The catalysed reaction is tRNA(n+1) + phosphate = tRNA(n) + a ribonucleoside 5'-diphosphate. Phosphorolytic 3'-5' exoribonuclease that plays an important role in tRNA 3'-end maturation. Removes nucleotide residues following the 3'-CCA terminus of tRNAs; can also add nucleotides to the ends of RNA molecules by using nucleoside diphosphates as substrates, but this may not be physiologically important. Probably plays a role in initiation of 16S rRNA degradation (leading to ribosome degradation) during starvation. This chain is Ribonuclease PH, found in Streptomyces coelicolor (strain ATCC BAA-471 / A3(2) / M145).